The sequence spans 230 residues: PsbP-like protein 1, chloroplastic (230 aa).

The protein belongs to the PsbP family.

The protein localises to the plastid. Its subcellular location is the chloroplast thylakoid lumen. Required for efficient repair of photodamaged PSII, but not tightly associated with the complex. The protein is PsbP-like protein 1, chloroplastic (PPL1) of Arabidopsis thaliana (Mouse-ear cress).